We begin with the raw amino-acid sequence, 105 residues long: Pyruvate synthase subunit PorD (105 aa).

4Fe-4S ferredoxin-type domains are found at residues 44 to 73 (FKPE…LDEE) and 74 to 103 (GYPV…MVRE). [4Fe-4S] cluster is bound by residues Cys53, Cys56, Cys59, Cys63, Cys83, Cys86, Cys89, and Cys93.

Heterotetramer of one alpha, one beta, one delta and one gamma chain. [4Fe-4S] cluster is required as a cofactor.

This is Pyruvate synthase subunit PorD (porD) from Pyrococcus horikoshii (strain ATCC 700860 / DSM 12428 / JCM 9974 / NBRC 100139 / OT-3).